The following is an 84-amino-acid chain: Large ribosomal subunit protein bL27 (84 aa).

A disordered region spans residues 1–25; sequence MAHKKGAGSTKNGRDSKPKMLGVKR.

The protein belongs to the bacterial ribosomal protein bL27 family.

This Dehalococcoides mccartyi (strain ATCC BAA-2266 / KCTC 15142 / 195) (Dehalococcoides ethenogenes (strain 195)) protein is Large ribosomal subunit protein bL27.